Consider the following 461-residue polypeptide: Kynureninase (461 aa).

Pyridoxal 5'-phosphate is bound by residues Leu114, Thr115, 142 to 145 (FPSD), Asp228, His231, and Tyr253. At Lys254 the chain carries N6-(pyridoxal phosphate)lysine. Positions 288 and 316 each coordinate pyridoxal 5'-phosphate.

It belongs to the kynureninase family. In terms of assembly, homodimer. The cofactor is pyridoxal 5'-phosphate.

It is found in the cytoplasm. The catalysed reaction is L-kynurenine + H2O = anthranilate + L-alanine + H(+). It carries out the reaction 3-hydroxy-L-kynurenine + H2O = 3-hydroxyanthranilate + L-alanine + H(+). It functions in the pathway amino-acid degradation; L-kynurenine degradation; L-alanine and anthranilate from L-kynurenine: step 1/1. It participates in cofactor biosynthesis; NAD(+) biosynthesis; quinolinate from L-kynurenine: step 2/3. Functionally, catalyzes the cleavage of L-kynurenine (L-Kyn) and L-3-hydroxykynurenine (L-3OHKyn) into anthranilic acid (AA) and 3-hydroxyanthranilic acid (3-OHAA), respectively. The chain is Kynureninase from Lodderomyces elongisporus (strain ATCC 11503 / CBS 2605 / JCM 1781 / NBRC 1676 / NRRL YB-4239) (Yeast).